Reading from the N-terminus, the 527-residue chain is V(D)J recombination-activating protein 2 (527 aa).

Residues 359 to 380 (QKIVSNSQTSTEDPGDSTPFED) form a disordered region. Residues 361–370 (IVSNSQTSTE) are compositionally biased toward polar residues. Over residues 371 to 380 (DPGDSTPFED) the composition is skewed to acidic residues. The PHD-type; atypical zinc-finger motif lies at 416–484 (WITCCPTCDV…KYYCNEHVQI (69 aa)). Zn(2+)-binding residues include C419, C423, C446, H452, H455, C458, C478, and H481. The segment at 490–511 (TPKRNPPLQKPPMKSLHKKGSG) is disordered.

It belongs to the RAG2 family. In terms of assembly, component of the RAG complex composed of core components RAG1 and RAG2, and associated component HMGB1 or HMGB2. In terms of tissue distribution, maturing lymphoid cells.

The protein localises to the nucleus. Its function is as follows. Core component of the RAG complex, a multiprotein complex that mediates the DNA cleavage phase during V(D)J recombination. V(D)J recombination assembles a diverse repertoire of immunoglobulin and T-cell receptor genes in developing B and T-lymphocytes through rearrangement of different V (variable), in some cases D (diversity), and J (joining) gene segments. DNA cleavage by the RAG complex occurs in 2 steps: a first nick is introduced in the top strand immediately upstream of the heptamer, generating a 3'-hydroxyl group that can attack the phosphodiester bond on the opposite strand in a direct transesterification reaction, thereby creating 4 DNA ends: 2 hairpin coding ends and 2 blunt, 5'-phosphorylated ends. The chromatin structure plays an essential role in the V(D)J recombination reactions and the presence of histone H3 trimethylated at 'Lys-4' (H3K4me3) stimulates both the nicking and haipinning steps. The RAG complex also plays a role in pre-B cell allelic exclusion, a process leading to expression of a single immunoglobulin heavy chain allele to enforce clonality and monospecific recognition by the B-cell antigen receptor (BCR) expressed on individual B-lymphocytes. The introduction of DNA breaks by the RAG complex on one immunoglobulin allele induces ATM-dependent repositioning of the other allele to pericentromeric heterochromatin, preventing accessibility to the RAG complex and recombination of the second allele. In the RAG complex, RAG2 is not the catalytic component but is required for all known catalytic activities mediated by RAG1. It probably acts as a sensor of chromatin state that recruits the RAG complex to H3K4me3. The chain is V(D)J recombination-activating protein 2 (Rag2) from Mus musculus (Mouse).